Consider the following 393-residue polypeptide: Sister chromatid cohesion protein DCC1 (393 aa).

It belongs to the DCC1 family. In terms of assembly, component of the CTF18-RFC complex which consists of CTF8, CTF18, DSCC1 and the RFC complex. Interacts with CTF8 and CTF18. Interacts with DDX11.

It localises to the nucleus. Functionally, loads PCNA onto primed templates regulating velocity, spacing and restart activity of replication forks. May couple DNA replication to sister chromatid cohesion through regulation of the acetylation of the cohesin subunit SMC3. The sequence is that of Sister chromatid cohesion protein DCC1 (DSCC1) from Homo sapiens (Human).